The following is a 354-amino-acid chain: Histidinol-phosphate aminotransferase (354 aa).

Lys-208 carries the N6-(pyridoxal phosphate)lysine modification.

Belongs to the class-II pyridoxal-phosphate-dependent aminotransferase family. Histidinol-phosphate aminotransferase subfamily. Homodimer. It depends on pyridoxal 5'-phosphate as a cofactor.

The enzyme catalyses L-histidinol phosphate + 2-oxoglutarate = 3-(imidazol-4-yl)-2-oxopropyl phosphate + L-glutamate. The protein operates within amino-acid biosynthesis; L-histidine biosynthesis; L-histidine from 5-phospho-alpha-D-ribose 1-diphosphate: step 7/9. The polypeptide is Histidinol-phosphate aminotransferase (Aquifex aeolicus (strain VF5)).